We begin with the raw amino-acid sequence, 272 residues long: Glutamate racemase (272 aa).

Residues Asp16 to Ser17 and Tyr48 to Gly49 contribute to the substrate site. Cys79 (proton donor/acceptor) is an active-site residue. Asn80–Thr81 is a binding site for substrate. Cys191 serves as the catalytic Proton donor/acceptor. Thr192 to His193 is a binding site for substrate.

The protein belongs to the aspartate/glutamate racemases family.

The enzyme catalyses L-glutamate = D-glutamate. It participates in cell wall biogenesis; peptidoglycan biosynthesis. Provides the (R)-glutamate required for cell wall biosynthesis. This is Glutamate racemase from Chlorobaculum parvum (strain DSM 263 / NCIMB 8327) (Chlorobium vibrioforme subsp. thiosulfatophilum).